The following is a 68-amino-acid chain: Serine rich endogenous peptide 22 (68 aa).

The signal sequence occupies residues 1-25 (MNKALVWLITLLFLIFSATPNRVLA). The SCOOP motif motif lies at 50-64 (KIGVGASNSGHSPGA). Residues 56–58 (SNS) carry the SxS motif essential for MIK2 binding motif.

It belongs to the serine rich endogenous peptide (SCOOP) phytocytokine family. Interacts with MIK2 (via extracellular leucine-rich repeat domain); this interaction triggers the formation of complex between MIK2 and the BAK1/SERK3 and SERK4 coreceptors, and subsequent BAK1 activation by phosphorylation.

The protein localises to the cell membrane. Its subcellular location is the secreted. It is found in the extracellular space. The protein resides in the apoplast. Brassicaceae-specific phytocytokine (plant endogenous peptide released into the apoplast) perceived by MIK2 in a BAK1/SERK3 and SERK4 coreceptors-dependent manner, that modulates various physiological and antimicrobial processes including growth prevention and reactive oxygen species (ROS) response regulation. The sequence is that of Serine rich endogenous peptide 22 from Arabidopsis thaliana (Mouse-ear cress).